Consider the following 215-residue polypeptide: Ceramide-1-phosphate transfer protein (215 aa).

An N-acylsphingoid base 1-phosphate-binding residues include aspartate 57, lysine 61, arginine 107, arginine 111, and histidine 151.

It belongs to the GLTP family.

Its subcellular location is the cytoplasm. It is found in the cytosol. The protein resides in the golgi apparatus. The protein localises to the trans-Golgi network membrane. It localises to the cell membrane. Its subcellular location is the endosome membrane. It is found in the nucleus outer membrane. It catalyses the reaction N-(hexadecanoyl)-sphing-4-enine-1-phosphate(in) = N-(hexadecanoyl)-sphing-4-enine-1-phosphate(out). The catalysed reaction is N-(9Z-octadecenoyl)-sphing-4-enine-1-phosphate(in) = N-(9Z-octadecenoyl)-sphing-4-enine-1-phosphate(out). In terms of biological role, mediates the intracellular transfer of ceramide-1-phosphate (C1P) between organelle membranes and the cell membrane. Required for normal structure of the Golgi stacks. Can bind phosphoceramides with a variety of aliphatic chains, but has a preference for lipids with saturated C16:0 or monounsaturated C18:1 aliphatic chains, and is inefficient with phosphoceramides containing lignoceryl (C24:0). Plays a role in the regulation of the cellular levels of ceramide-1-phosphate, and thereby contributes to the regulation of phospholipase PLA2G4A activity and the release of arachidonic acid. Has no activity with galactosylceramide, lactosylceramide, sphingomyelin, phosphatidylcholine, phosphatidic acid and ceramide. C1P transfer is stimulated by phosphatidylserine in C1P source vesicles. Regulates autophagy and pyroptosis, but not apoptosis. This Xenopus tropicalis (Western clawed frog) protein is Ceramide-1-phosphate transfer protein (cptp).